The sequence spans 363 residues: 3-methyl-D-ornithine--L-lysine ligase (363 aa).

Lys10 is a binding site for ATP. 11 to 12 (LQ) serves as a coordination point for L-lysine. Residues Asp31, 49–50 (DV), and 72–73 (EN) contribute to the ATP site. Glu72 serves as a coordination point for L-lysine. Residues Lys104, Lys131, Ser138, and 160-163 (EEYV) contribute to the ADP site. D-ornithine-binding positions include 169–171 (SLE) and Asp225. Mg(2+) is bound by residues Glu227, Glu239, and Asp241. Glu239 is a binding site for ADP. D-ornithine contacts are provided by residues 243–248 (RFPSQT) and Glu302. L-lysine is bound by residues Ser246 and Glu302.

This sequence belongs to the PylC family. The cofactor is Mg(2+).

The catalysed reaction is (3R)-3-methyl-D-ornithine + L-lysine + ATP = (3R)-3-methyl-D-ornithyl-N(6)-L-lysine + ADP + phosphate + H(+). The protein operates within amino-acid biosynthesis; L-pyrrolysine biosynthesis. Its function is as follows. Is required for the biosynthesis of pyrrolysine. Catalyzes the ATP-dependent ligation between (3R)-3-methyl-D-ornithine and L-lysine, leading to (3R)-3-methyl-D-ornithyl-N6-L-lysine. This Methanosarcina barkeri (strain Fusaro / DSM 804) protein is 3-methyl-D-ornithine--L-lysine ligase.